The primary structure comprises 65 residues: Large ribosomal subunit protein bL35 (65 aa).

The segment at 1 to 28 (MPKMKTNRSAAKRFGKTGSGKFTRRRQN) is disordered.

This sequence belongs to the bacterial ribosomal protein bL35 family.

The sequence is that of Large ribosomal subunit protein bL35 from Solidesulfovibrio magneticus (strain ATCC 700980 / DSM 13731 / RS-1) (Desulfovibrio magneticus).